The following is a 413-amino-acid chain: Arginine biosynthesis bifunctional protein ArgJ (413 aa).

Residues Thr154, Lys180, Thr191, Glu277, Asn408, and Thr413 each coordinate substrate. Catalysis depends on Thr191, which acts as the Nucleophile.

Belongs to the ArgJ family. Heterotetramer of two alpha and two beta chains.

The protein localises to the cytoplasm. The enzyme catalyses N(2)-acetyl-L-ornithine + L-glutamate = N-acetyl-L-glutamate + L-ornithine. The catalysed reaction is L-glutamate + acetyl-CoA = N-acetyl-L-glutamate + CoA + H(+). Its pathway is amino-acid biosynthesis; L-arginine biosynthesis; L-ornithine and N-acetyl-L-glutamate from L-glutamate and N(2)-acetyl-L-ornithine (cyclic): step 1/1. The protein operates within amino-acid biosynthesis; L-arginine biosynthesis; N(2)-acetyl-L-ornithine from L-glutamate: step 1/4. In terms of biological role, catalyzes two activities which are involved in the cyclic version of arginine biosynthesis: the synthesis of N-acetylglutamate from glutamate and acetyl-CoA as the acetyl donor, and of ornithine by transacetylation between N(2)-acetylornithine and glutamate. The polypeptide is Arginine biosynthesis bifunctional protein ArgJ (Synechocystis sp. (strain ATCC 27184 / PCC 6803 / Kazusa)).